The chain runs to 167 residues: Large ribosomal subunit protein uL22 (167 aa).

The segment at 120 to 167 (GSTATTVEDEAPKAKGAKGAKAKKAPAKKAAAKKAPAKKFAGKKTAKR) is disordered. Residues 134–167 (KGAKGAKAKKAPAKKAAAKKAPAKKFAGKKTAKR) are compositionally biased toward basic residues.

It belongs to the universal ribosomal protein uL22 family. In terms of assembly, part of the 50S ribosomal subunit.

This protein binds specifically to 23S rRNA; its binding is stimulated by other ribosomal proteins, e.g. L4, L17, and L20. It is important during the early stages of 50S assembly. It makes multiple contacts with different domains of the 23S rRNA in the assembled 50S subunit and ribosome. Functionally, the globular domain of the protein is located near the polypeptide exit tunnel on the outside of the subunit, while an extended beta-hairpin is found that lines the wall of the exit tunnel in the center of the 70S ribosome. The sequence is that of Large ribosomal subunit protein uL22 from Koribacter versatilis (strain Ellin345).